A 252-amino-acid chain; its full sequence is MATQNPIQEVQESENSDHLIISQDPQHPANLIPELCSKFWHLGWVTGTGGGASIRNDNLVYLAPSGVQKELMKPEHIYVLDITAQVNPKQRIYLRSPPNLKPSQCTPLFMAAFTKRNAGCCIHTHSQWAVLITLLLESAPNTTMFEINNIEQIKAFGKGYTKTGNLGYHDTLRIPVIENTPHEEDLTEYLEEAMEKYPDTYAVLVRRHGVYVWGESVHKAKTQCESLDYLFQIAVEMKKLGLPWLSNVKPIA.

Residue Cys105 participates in substrate binding. Positions 123 and 125 each coordinate Zn(2+). Residue Glu151 is the Proton donor/acceptor of the active site. Residue His208 participates in Zn(2+) binding.

The protein belongs to the aldolase class II family. MtnB subfamily. It depends on Zn(2+) as a cofactor.

The protein resides in the cytoplasm. It carries out the reaction 5-(methylsulfanyl)-D-ribulose 1-phosphate = 5-methylsulfanyl-2,3-dioxopentyl phosphate + H2O. It participates in amino-acid biosynthesis; L-methionine biosynthesis via salvage pathway; L-methionine from S-methyl-5-thio-alpha-D-ribose 1-phosphate: step 2/6. In terms of biological role, catalyzes the dehydration of methylthioribulose-1-phosphate (MTRu-1-P) into 2,3-diketo-5-methylthiopentyl-1-phosphate (DK-MTP-1-P). This chain is Methylthioribulose-1-phosphate dehydratase, found in Sclerotinia sclerotiorum (strain ATCC 18683 / 1980 / Ss-1) (White mold).